Reading from the N-terminus, the 635-residue chain is DNA mismatch repair protein MutL (635 aa).

The segment at K352–R380 is disordered.

It belongs to the DNA mismatch repair MutL/HexB family.

Its function is as follows. This protein is involved in the repair of mismatches in DNA. It is required for dam-dependent methyl-directed DNA mismatch repair. May act as a 'molecular matchmaker', a protein that promotes the formation of a stable complex between two or more DNA-binding proteins in an ATP-dependent manner without itself being part of a final effector complex. This Symbiobacterium thermophilum (strain DSM 24528 / JCM 14929 / IAM 14863 / T) protein is DNA mismatch repair protein MutL.